Reading from the N-terminus, the 438-residue chain is MLKIYNSLTRKKEFFNPAHPPQINMYVCGPTVYNHLHLGNTRPLIFFDTVKRYLEMLNFRVYYVVNITDIDDKIIENALKNQVLEQDLANKYIKSFNNLLKTLNIQTINFKPQATQYINSMIVYIQTLLDQGFAYFTDQGIYFRVSKIDDYGKLKKQDLSQLKQNARKQLDPQKEFPGDFILWKKTSQGITYPSPWFAGRPGWHTECATMIEQLFKLPLDIHGGGTDLKFPHHENEIAQTHAHSHQKLANFFMHVERLDYQNQKMSKSLGNIIWCKDLLKQYNPCIIKLLILSTHYRKPINFSYDLMEQAQQKYQKITDFLTKNNFYLKVNQFSCQALDQDIMQLFHQLMQDDLATHKVIDLMEQTIKQAHQTQILDKLSQFQNSLLLILNILGITIPFNKPTKTDLQTYFLWQDARKYRDFAQADILRKQLLDKGFI.

Cysteine 28 provides a ligand contact to Zn(2+). The short motif at 30-40 (PTVYNHLHLGN) is the 'HIGH' region element. Zn(2+) contacts are provided by cysteine 207, histidine 232, and glutamate 236. A 'KMSKS' region motif is present at residues 264–268 (KMSKS). Lysine 267 serves as a coordination point for ATP.

The protein belongs to the class-I aminoacyl-tRNA synthetase family. As to quaternary structure, monomer. It depends on Zn(2+) as a cofactor.

It is found in the cytoplasm. The catalysed reaction is tRNA(Cys) + L-cysteine + ATP = L-cysteinyl-tRNA(Cys) + AMP + diphosphate. This Onion yellows phytoplasma (strain OY-M) protein is Cysteine--tRNA ligase.